A 152-amino-acid polypeptide reads, in one-letter code: Ribosome maturation factor RimP (152 aa).

Belongs to the RimP family.

The protein localises to the cytoplasm. In terms of biological role, required for maturation of 30S ribosomal subunits. This is Ribosome maturation factor RimP from Aeromonas hydrophila subsp. hydrophila (strain ATCC 7966 / DSM 30187 / BCRC 13018 / CCUG 14551 / JCM 1027 / KCTC 2358 / NCIMB 9240 / NCTC 8049).